Reading from the N-terminus, the 285-residue chain is UPF0603 protein At1g54780, chloroplastic (285 aa).

2 disordered regions span residues 1 to 48 and 228 to 251; these read METL…LSTR and GQPD…TKEE. Polar residues predominate over residues 22-40; it reads HQTKPTSHSLSLSKPTTFS. Residues 238-251 show a composition bias toward basic and acidic residues; that stretch reads KDSKRESNFKTKEE. The helical transmembrane segment at 259 to 279 threads the bilayer; it reads FSLVVGGLLVIAFVVPMAQYF.

The protein belongs to the UPF0603 family.

The protein resides in the plastid. It localises to the chloroplast thylakoid membrane. The polypeptide is UPF0603 protein At1g54780, chloroplastic (Arabidopsis thaliana (Mouse-ear cress)).